Reading from the N-terminus, the 222-residue chain is Global nitrogen regulator (222 aa).

6–128 (NSLLTMFREL…NVMLQGLSSR (123 aa)) serves as a coordination point for a nucleoside 3',5'-cyclic phosphate. Residues 142–215 (RDMGSRLVSF…KKRITVFNPV (74 aa)) enclose the HTH crp-type domain. The segment at residues 175-194 (HQAIAEAIGSTRVTVTRLLG) is a DNA-binding region (H-T-H motif).

Required for full expression of proteins subject to ammonium repression. Transcriptional activator of genes subject to nitrogen control. In Synechococcus elongatus (strain ATCC 33912 / PCC 7942 / FACHB-805) (Anacystis nidulans R2), this protein is Global nitrogen regulator (ntcA).